The primary structure comprises 537 residues: Chaperonin GroEL (537 aa).

Residues 29–32, 86–90, Gly413, 477–479, and Asp493 contribute to the ATP site; these read TLGP, DGTTT, and NAA.

This sequence belongs to the chaperonin (HSP60) family. As to quaternary structure, forms a cylinder of 14 subunits composed of two heptameric rings stacked back-to-back. Interacts with the co-chaperonin GroES.

The protein localises to the cytoplasm. It carries out the reaction ATP + H2O + a folded polypeptide = ADP + phosphate + an unfolded polypeptide.. Its function is as follows. Together with its co-chaperonin GroES, plays an essential role in assisting protein folding. The GroEL-GroES system forms a nano-cage that allows encapsulation of the non-native substrate proteins and provides a physical environment optimized to promote and accelerate protein folding. This chain is Chaperonin GroEL, found in Lactobacillus delbrueckii subsp. bulgaricus (strain ATCC 11842 / DSM 20081 / BCRC 10696 / JCM 1002 / NBRC 13953 / NCIMB 11778 / NCTC 12712 / WDCM 00102 / Lb 14).